A 224-amino-acid polypeptide reads, in one-letter code: Leucyl/phenylalanyl-tRNA--protein transferase (224 aa).

It belongs to the L/F-transferase family.

It localises to the cytoplasm. The catalysed reaction is N-terminal L-lysyl-[protein] + L-leucyl-tRNA(Leu) = N-terminal L-leucyl-L-lysyl-[protein] + tRNA(Leu) + H(+). It catalyses the reaction N-terminal L-arginyl-[protein] + L-leucyl-tRNA(Leu) = N-terminal L-leucyl-L-arginyl-[protein] + tRNA(Leu) + H(+). The enzyme catalyses L-phenylalanyl-tRNA(Phe) + an N-terminal L-alpha-aminoacyl-[protein] = an N-terminal L-phenylalanyl-L-alpha-aminoacyl-[protein] + tRNA(Phe). Functions in the N-end rule pathway of protein degradation where it conjugates Leu, Phe and, less efficiently, Met from aminoacyl-tRNAs to the N-termini of proteins containing an N-terminal arginine or lysine. In Rhodopseudomonas palustris (strain HaA2), this protein is Leucyl/phenylalanyl-tRNA--protein transferase.